Here is an 83-residue protein sequence, read N- to C-terminus: Mu-theraphotoxin-Hhn2f (83 aa).

The first 21 residues, 1–21 (MKASMFLALAGLVLLFVVGYA), serve as a signal peptide directing secretion. A propeptide spanning residues 22 to 48 (SESEEKEFPIELLSKIFAVDVFKGEER) is cleaved from the precursor. 3 disulfides stabilise this stretch: Cys50/Cys65, Cys57/Cys70, and Cys64/Cys77. The residue at position 81 (Leu81) is a Leucine amide.

The protein belongs to the neurotoxin 10 (Hwtx-1) family. 15 (Hntx-3) subfamily. Monomer. Expressed by the venom gland.

Its subcellular location is the secreted. Lethal neurotoxin. Selectively blocks tetrodotoxin-sensitive voltage-gated sodium channels (Nav). Does not affect tetrodotoxin-resistant voltage-gated sodium channels or calcium channels. The chain is Mu-theraphotoxin-Hhn2f from Cyriopagopus hainanus (Chinese bird spider).